Here is a 340-residue protein sequence, read N- to C-terminus: Phosphoribosylformylglycinamidine cyclo-ligase (340 aa).

Belongs to the AIR synthase family.

The protein resides in the cytoplasm. It carries out the reaction 2-formamido-N(1)-(5-O-phospho-beta-D-ribosyl)acetamidine + ATP = 5-amino-1-(5-phospho-beta-D-ribosyl)imidazole + ADP + phosphate + H(+). It functions in the pathway purine metabolism; IMP biosynthesis via de novo pathway; 5-amino-1-(5-phospho-D-ribosyl)imidazole from N(2)-formyl-N(1)-(5-phospho-D-ribosyl)glycinamide: step 2/2. This is Phosphoribosylformylglycinamidine cyclo-ligase from Streptococcus pneumoniae (strain Taiwan19F-14).